The following is a 347-amino-acid chain: tRNA N6-adenosine threonylcarbamoyltransferase (347 aa).

Positions 110 and 114 each coordinate Fe cation. Substrate is bound by residues Val-133–Gly-137, Asp-168, Gly-181, Asp-185, and Asn-277. Asp-305 serves as a coordination point for Fe cation.

Belongs to the KAE1 / TsaD family. The cofactor is Fe(2+).

It is found in the cytoplasm. It carries out the reaction L-threonylcarbamoyladenylate + adenosine(37) in tRNA = N(6)-L-threonylcarbamoyladenosine(37) in tRNA + AMP + H(+). Functionally, required for the formation of a threonylcarbamoyl group on adenosine at position 37 (t(6)A37) in tRNAs that read codons beginning with adenine. Is involved in the transfer of the threonylcarbamoyl moiety of threonylcarbamoyl-AMP (TC-AMP) to the N6 group of A37, together with TsaE and TsaB. TsaD likely plays a direct catalytic role in this reaction. This chain is tRNA N6-adenosine threonylcarbamoyltransferase, found in Kineococcus radiotolerans (strain ATCC BAA-149 / DSM 14245 / SRS30216).